We begin with the raw amino-acid sequence, 43 residues long: Potassium channel toxin gamma-KTx 4.12 (43 aa).

Disulfide bonds link cysteine 5–cysteine 23, cysteine 11–cysteine 34, cysteine 20–cysteine 39, and cysteine 24–cysteine 41.

As to expression, expressed by the venom gland.

It is found in the secreted. In terms of biological role, reversibly blocks Kv11/ERG potassium channels. Is less toxic than ergtoxin (AC Q86QT3). This chain is Potassium channel toxin gamma-KTx 4.12, found in Centruroides sculpturatus (Arizona bark scorpion).